The chain runs to 522 residues: Anti-sigma-I factor RsgI4 (522 aa).

The Cytoplasmic portion of the chain corresponds to 1-51; that stretch reads MNLGVVIKIKRKKAIIVTETGEFKAVNARNGMFLGQKILFDQQDVIENNRN. A RsgI N-terminal anti-sigma domain is found at 2–49; sequence NLGVVIKIKRKKAIIVTETGEFKAVNARNGMFLGQKILFDQQDVIENN. Residues 52 to 72 form a helical membrane-spanning segment; sequence GIGLAYSAAIAGMVAVFVFMF. Over 73 to 522 the chain is Extracellular; the sequence is TYFGLHNFNG…SGILKWGREP (450 aa). A compositionally biased stretch (low complexity) spans 311–361; the sequence is SAKTPERATTVPVNTPVKPTDAPTKSPATATATATRAPVKATATPAKTLKP. The disordered stretch occupies residues 311 to 371; that stretch reads SAKTPERATT…SDTPVKTPDG (61 aa). One can recognise a CBM3 domain in the interval 371–522; that stretch reads GEQSVKVRFY…SGILKWGREP (152 aa).

As to quaternary structure, interacts (via RsgI N-terminal anti-sigma domain) with SigI4.

It localises to the cell membrane. Anti-sigma factor for SigI4. Negatively regulates SigI4 activity through direct interaction. Binding of the polysaccharide substrate to the extracellular C-terminal sensing domain of RsgI4 may induce a conformational change in its N-terminal cytoplasmic region, leading to the release and activation of SigI4. This is Anti-sigma-I factor RsgI4 from Acetivibrio thermocellus (strain ATCC 27405 / DSM 1237 / JCM 9322 / NBRC 103400 / NCIMB 10682 / NRRL B-4536 / VPI 7372) (Clostridium thermocellum).